Here is a 122-residue protein sequence, read N- to C-terminus: Neutral phospholipase A2 agkistrodotoxin (122 aa).

7 disulfide bridges follow: Cys26–Cys115, Cys28–Cys44, Cys43–Cys95, Cys49–Cys122, Cys50–Cys88, Cys57–Cys81, and Cys75–Cys86. The Ca(2+) site is built by Tyr27, Gly29, and Gly31. Residue His47 is part of the active site. Asp48 contacts Ca(2+). Asp89 is a catalytic residue.

Requires Ca(2+) as cofactor. In terms of tissue distribution, expressed by the venom gland.

The protein resides in the secreted. The enzyme catalyses a 1,2-diacyl-sn-glycero-3-phosphocholine + H2O = a 1-acyl-sn-glycero-3-phosphocholine + a fatty acid + H(+). Snake venom phospholipase A2 (PLA2) that inhibits neuromuscular transmission by blocking acetylcholine release from the nerve termini. PLA2 catalyzes the calcium-dependent hydrolysis of the 2-acyl groups in 3-sn-phosphoglycerides. This Gloydius halys (Chinese water mocassin) protein is Neutral phospholipase A2 agkistrodotoxin.